Here is a 102-residue protein sequence, read N- to C-terminus: MIPGEFYISHGNIELNVGRQQVLVTIINTGDRPIQIGSHFHFYEVNSALKFNRVITRGFRLNIPSGTAIRFEPGQFRTVELVKYAGACKIYGFCKAIMGKLD.

The protein belongs to the urease beta subunit family. Heterotrimer of UreA (gamma), UreB (beta) and UreC (alpha) subunits. Three heterotrimers associate to form the active enzyme.

Its subcellular location is the cytoplasm. It carries out the reaction urea + 2 H2O + H(+) = hydrogencarbonate + 2 NH4(+). The protein operates within nitrogen metabolism; urea degradation; CO(2) and NH(3) from urea (urease route): step 1/1. The chain is Urease subunit beta from Blochmanniella pennsylvanica (strain BPEN).